Reading from the N-terminus, the 133-residue chain is Small ribosomal subunit protein uS9 (133 aa).

Positions 94–133 (SADNRKPLKTEGHLSRDPRAKERRKYGLKKARKAPQFSKR) are disordered. Over residues 95–113 (ADNRKPLKTEGHLSRDPRA) the composition is skewed to basic and acidic residues. Residues 114-133 (KERRKYGLKKARKAPQFSKR) are compositionally biased toward basic residues.

This sequence belongs to the universal ribosomal protein uS9 family.

The polypeptide is Small ribosomal subunit protein uS9 (Synechococcus sp. (strain CC9605)).